The following is a 372-amino-acid chain: MGDDEARSWIRGDETAKQMLSRVLKDRAFLLIPPLHRVPLRAGNVVEITGASTSAKTQILIQAAISCILPKTWNGIHYGGLGKLVLFLDLDCRFDVLRLSQMLKHRLLQANWLGNGAWWQLEESNVKSCKSAEEKTKTVFDEELYASCMKRFLYVRCYDSLELLSSLKTLHYRIQQQEACGSQVGVLMIDSIGAFHWTDRLSSSLALETHNRKSLSLTNVVETIVQELKKLLLVHSLVVLATKGTIYEEKYPANENNRKVSSNDHFSGNVASKAQQPPFREFMPSSWQAFVTHKIIIRKSADYQSLQTGQQNLLAYSLEWLQPQLSRIDRFIVDDVRKLTTIKPFYSKLLLIYIVIPASSSHAVWYCHCLVT.

Belongs to the RecA family. RAD51 subfamily.

Its subcellular location is the nucleus. In terms of biological role, involved in the homologous recombination repair (HRR) pathway of double-stranded DNA, thought to repair chromosomal fragmentation, translocations and deletions. This chain is DNA repair protein XRCC2 homolog (XRCC2), found in Arabidopsis thaliana (Mouse-ear cress).